The primary structure comprises 309 residues: Olfactory receptor 8A1 (309 aa).

Topologically, residues 1–28 (MTAENQSTVTEFILGGLTNRPELQLPLF) are extracellular. A helical transmembrane segment spans residues 29-49 (LLFLGIYVVTMVGNLGMITLI). The Cytoplasmic segment spans residues 50–56 (GLNSQLH). The chain crosses the membrane as a helical span at residues 57 to 77 (TPMYFFLSNLSLVDLCYSSVI). The Extracellular portion of the chain corresponds to 78–90 (TPKMLINFVSQRN). The chain crosses the membrane as a helical span at residues 91–111 (LISYVGCMSQLYFFLVFVIAE). A disulfide bond links C97 and C188. Over 112–133 (CYMLTVMAYDRYVAICQPLLYN) the chain is Cytoplasmic. Residues 134-154 (IIMSPALCSLLVAFVYAVGLI) traverse the membrane as a helical segment. The Extracellular segment spans residues 155-195 (GSAIETGLMLKLNYCEDLISHYFCDILPLMKLSCSSTYDVE). Residues 196–216 (MAVFFLAGFDIIVTSLTVLIS) traverse the membrane as a helical segment. At 217-238 (YAFILSSILRISSNEGRSKAFS) the chain is on the cytoplasmic side. The chain crosses the membrane as a helical span at residues 239–259 (TCSSHFAAVGLFYGSTAFMYL). The Extracellular segment spans residues 260 to 270 (KPSTASSLAQE). Residues 271-291 (NVASVFYTTVIPMFNPLIYSL) traverse the membrane as a helical segment. The Cytoplasmic portion of the chain corresponds to 292–309 (RNKEVKTALDKTLRRKVF).

Belongs to the G-protein coupled receptor 1 family.

The protein resides in the cell membrane. Its function is as follows. Odorant receptor. The sequence is that of Olfactory receptor 8A1 from Mus musculus (Mouse).